The chain runs to 370 residues: Aminomethyltransferase (370 aa).

It belongs to the GcvT family. In terms of assembly, the glycine cleavage system is composed of four proteins: P, T, L and H.

It carries out the reaction N(6)-[(R)-S(8)-aminomethyldihydrolipoyl]-L-lysyl-[protein] + (6S)-5,6,7,8-tetrahydrofolate = N(6)-[(R)-dihydrolipoyl]-L-lysyl-[protein] + (6R)-5,10-methylene-5,6,7,8-tetrahydrofolate + NH4(+). Its function is as follows. The glycine cleavage system catalyzes the degradation of glycine. The protein is Aminomethyltransferase of Prochlorococcus marinus (strain MIT 9515).